We begin with the raw amino-acid sequence, 417 residues long: Serine hydroxymethyltransferase (417 aa).

(6S)-5,6,7,8-tetrahydrofolate is bound by residues Leu-120 and 124-126 (GHL). Lys-229 is modified (N6-(pyridoxal phosphate)lysine). 354–356 (SPF) is a (6S)-5,6,7,8-tetrahydrofolate binding site.

The protein belongs to the SHMT family. In terms of assembly, homodimer. Pyridoxal 5'-phosphate is required as a cofactor.

It is found in the cytoplasm. The catalysed reaction is (6R)-5,10-methylene-5,6,7,8-tetrahydrofolate + glycine + H2O = (6S)-5,6,7,8-tetrahydrofolate + L-serine. It functions in the pathway one-carbon metabolism; tetrahydrofolate interconversion. It participates in amino-acid biosynthesis; glycine biosynthesis; glycine from L-serine: step 1/1. In terms of biological role, catalyzes the reversible interconversion of serine and glycine with tetrahydrofolate (THF) serving as the one-carbon carrier. This reaction serves as the major source of one-carbon groups required for the biosynthesis of purines, thymidylate, methionine, and other important biomolecules. Also exhibits THF-independent aldolase activity toward beta-hydroxyamino acids, producing glycine and aldehydes, via a retro-aldol mechanism. The chain is Serine hydroxymethyltransferase from Acinetobacter radioresistens.